We begin with the raw amino-acid sequence, 334 residues long: L-lactate dehydrogenase B chain (334 aa).

Ala-2 bears the N-acetylalanine mark. Lys-7 is modified (N6-acetyllysine). Ser-44 is modified (phosphoserine). NAD(+) contacts are provided by residues Asp-53–Lys-58 and Arg-100. At Lys-58 the chain carries N6-acetyllysine. Residue Arg-107 participates in substrate binding. N6-acetyllysine is present on Lys-119. NAD(+) is bound at residue Asn-139. Asn-139 and Arg-170 together coordinate substrate. The active-site Proton acceptor is the His-194. Tyr-240 bears the Phosphotyrosine mark. A substrate-binding site is contributed by Thr-249. Lys-329 bears the N6-acetyllysine mark.

This sequence belongs to the LDH/MDH superfamily. LDH family. Homotetramer. Interacts with PTEN upstream reading frame protein MP31; the interaction leads to inhibition of mitochondrial lactate dehydrogenase activity, preventing conversion of lactate to pyruvate in mitochondria.

It localises to the cytoplasm. The protein localises to the mitochondrion inner membrane. It carries out the reaction (S)-lactate + NAD(+) = pyruvate + NADH + H(+). It participates in fermentation; pyruvate fermentation to lactate; (S)-lactate from pyruvate: step 1/1. Functionally, interconverts simultaneously and stereospecifically pyruvate and lactate with concomitant interconversion of NADH and NAD(+). In Bos taurus (Bovine), this protein is L-lactate dehydrogenase B chain (LDHB).